The sequence spans 300 residues: Ribonuclease HIII (300 aa).

Residues 83-300 (IPIIGSDEVG…THKAQALLTK (218 aa)) form the RNase H type-2 domain. Aspartate 89, glutamate 90, and aspartate 194 together coordinate a divalent metal cation.

The protein belongs to the RNase HII family. RnhC subfamily. It depends on Mn(2+) as a cofactor. Mg(2+) serves as cofactor.

The protein resides in the cytoplasm. The enzyme catalyses Endonucleolytic cleavage to 5'-phosphomonoester.. Its function is as follows. Endonuclease that specifically degrades the RNA of RNA-DNA hybrids. The protein is Ribonuclease HIII of Streptococcus pyogenes serotype M28 (strain MGAS6180).